The following is a 206-amino-acid chain: MSDPRQQLIALGAVFESAALVDKLARTGQISEAPLGCMLGSLLARNPASTLDVYGGDSLNLRDGFKALASALERKPGSLQREPLRYALAMLTLERQLDKRGDMLDLIGQRLDQVEQQVQHFGLVHENVIASFASIYQDTLSTFRQRIQVHGDMRHLQVSSNAARIRALLLAGIRSARLWRQLGGSRWQMVFSRRRLLNELYPLLRG.

This sequence belongs to the HflD family.

The protein localises to the cytoplasm. It is found in the cell inner membrane. This chain is High frequency lysogenization protein HflD homolog, found in Pseudomonas aeruginosa (strain LESB58).